The chain runs to 968 residues: A disintegrin and metalloproteinase with thrombospondin motifs 1 (968 aa).

Disordered stretches follow at residues 1-23 (MQPK…DVQR) and 177-253 (APAV…RKKR). The N-terminal stretch at 1 to 48 (MQPKVPLGSRKQKPCSDMGDVQRAARSRGSLSAHMLLLLLASITMLLC) is a signal peptide. A propeptide spanning residues 49 to 253 (ARGAHGRPTE…SGPGSIRKKR (205 aa)) is cleaved from the precursor. The Cysteine switch signature appears at 204 to 211 (AKCGVMDD). Cys206 contacts Zn(2+). A compositionally biased stretch (polar residues) spans 214–229 (LPTSDSRPESQNTRNQ). Residues 259 to 468 (RYVETMLVAD…GHGECLMDKP (210 aa)) enclose the Peptidase M12B domain. Ca(2+) is bound by residues Glu262, Asp345, and Asp352. Disulfide bonds link Cys334–Cys386, Cys363–Cys368, Cys380–Cys463, and Cys418–Cys447. Zn(2+) is bound at residue His402. Glu403 is a catalytic residue. The Zn(2+) site is built by His406 and His412. Ca(2+) contacts are provided by Cys463 and Asp466. The region spanning 477 to 559 (DLPGTLYDAN…TDMKHFATPV (83 aa)) is the Disintegrin domain. 4 disulfide bridges follow: Cys489-Cys512, Cys500-Cys522, Cys507-Cys541, and Cys535-Cys546. Residue Asn548 is glycosylated (N-linked (GlcNAc...) asparagine). In terms of domain architecture, TSP type-1 1 spans 560–615 (HGSWGPWGPWGDCSRTCGGGVQYTMRECDNPVPKNGGKYCEGKRVRYRSCNIEDCP). 3 cysteine pairs are disulfide-bonded: Cys572-Cys609, Cys576-Cys614, and Cys587-Cys599. Asn721, Asn765, and Asn783 each carry an N-linked (GlcNAc...) asparagine glycan. The spacer stretch occupies residues 726-850 (KKMSGIVTST…YFMKKKTESF (125 aa)). 2 consecutive TSP type-1 domains span residues 855–911 (TFSE…LPCP) and 912–968 (HWQV…TQCS). N-linked (GlcNAc...) asparagine glycosylation is present at Asn946.

The cofactor is Zn(2+). The precursor is cleaved by a furin endopeptidase. Post-translationally, glycosylated. Can be O-fucosylated by POFUT2 on a serine or a threonine residue found within the consensus sequence C1-X(2)-(S/T)-C2-G of the TSP type-1 repeat domains where C1 and C2 are the first and second cysteine residue of the repeat, respectively. Fucosylated repeats can then be further glycosylated by the addition of a beta-1,3-glucose residue by the glucosyltransferase, B3GALTL. Fucosylation mediates the efficient secretion of ADAMTS family members. Can also be C-glycosylated with one or two mannose molecules on tryptophan residues within the consensus sequence W-X-X-W of the TPRs, and N-glycosylated. These other glycosylations can also facilitate secretion.

The protein resides in the secreted. It localises to the extracellular space. Its subcellular location is the extracellular matrix. Functionally, metalloprotease which cleaves aggrecan, a cartilage proteoglycan, at the '1691-Glu-|-Leu-1692' site (within the chondroitin sulfate attachment domain), and may be involved in its turnover. Also cleaves COMP. Has angiogenic inhibitor activity. May play a critical role in follicular rupture. This chain is A disintegrin and metalloproteinase with thrombospondin motifs 1 (Adamts1), found in Mus musculus (Mouse).